A 288-amino-acid chain; its full sequence is Undecaprenyl-diphosphatase (288 aa).

8 helical membrane passes run 11 to 31 (LDLW…FLPI), 49 to 69 (PGVA…LSYF), 94 to 114 (AQMG…GLLI), 129 to 149 (LAAI…AEQL), 159 to 179 (LRLA…IPGV), 199 to 219 (AARF…LVEL), 234 to 254 (VLAI…AWLL), and 265 to 285 (FVVY…TGTL).

This sequence belongs to the UppP family.

It is found in the cell inner membrane. It carries out the reaction di-trans,octa-cis-undecaprenyl diphosphate + H2O = di-trans,octa-cis-undecaprenyl phosphate + phosphate + H(+). Its function is as follows. Catalyzes the dephosphorylation of undecaprenyl diphosphate (UPP). Confers resistance to bacitracin. In Synechococcus elongatus (strain ATCC 33912 / PCC 7942 / FACHB-805) (Anacystis nidulans R2), this protein is Undecaprenyl-diphosphatase.